A 347-amino-acid chain; its full sequence is MNPLASIMITLTIILGTMIVMTSSHWLLVWIGFEMNMLAIIPVLMKQHSPRAVEAATKYFLTQATASMLLMLAVVTNLLYSGQWTVTNITNPLASAVMTLALVMKLGLSPFHFWVPEVAQGIPLSSGLVLLTWQKLAPLSVLYQISHSVSPTLLLTVSLMSIAVGGWGGLNQTQLRKILAYSSIAHMGWMTAVLAYNPTLTLLNLTLYILMTTTTFLLFMFNSSTTTLTLSHSWNKSPMIATSTLTIMLSLGGLPPLTGFLPKWMIIQELTKNESLLLPTLMAMMALLSLYFYMRLTYSTSLTLFPSMNNTKMKWHLNNTKKVPLLPPMITLFTLALPLAPALSTLY.

10 helical membrane passes run 13-33, 59-79, 96-116, 122-142, 149-169, 178-198, 201-221, 247-267, 274-294, and 323-343; these read IILG…WIGF, YFLT…TNLL, AVMT…FWVP, IPLS…LSVL, VSPT…GWGG, ILAY…AYNP, TLLN…LFMF, IMLS…WMII, ESLL…YFYM, and VPLL…APAL.

It belongs to the complex I subunit 2 family. Core subunit of respiratory chain NADH dehydrogenase (Complex I) which is composed of 45 different subunits. Interacts with TMEM242.

The protein localises to the mitochondrion inner membrane. It catalyses the reaction a ubiquinone + NADH + 5 H(+)(in) = a ubiquinol + NAD(+) + 4 H(+)(out). Its function is as follows. Core subunit of the mitochondrial membrane respiratory chain NADH dehydrogenase (Complex I) which catalyzes electron transfer from NADH through the respiratory chain, using ubiquinone as an electron acceptor. Essential for the catalytic activity and assembly of complex I. The sequence is that of NADH-ubiquinone oxidoreductase chain 2 from Megaderma spasma (Lesser false vampire bat).